An 845-amino-acid polypeptide reads, in one-letter code: Receptor-like protein Cf-9 homolog (845 aa).

An N-terminal signal peptide occupies residues 1-19 (MGCVKLVFFMLLKLDLLEF). Residues 20–70 (KNMFTVNPNASDYCYDYTDQRMQSYPRTLFWNKSTDCCSWDGIHCDETTGQ) form an N-cap region. Residues 20–794 (KNMFTVNPNA…EEDSPMISWQ (775 aa)) lie on the Extracellular side of the membrane. 3 N-linked (GlcNAc...) asparagine glycosylation sites follow: N28, N51, and N88. The LRR 1; degenerate repeat unit spans residues 71-94 (VVELDLRCSQLQGKFHSNSSLFQL). 25 LRR repeats span residues 95–118 (SNLK…KFGE), 119–143 (FSDL…ISHL), 144–171 (SKLH…LKNL), 172–193 (TQLR…SNFS), 194–217 (SHLT…VFHL), 219–242 (DLEF…KWNS), 244–266 (ASLM…SFSH), 267–291 (LTSL…LWNL), 292–316 (TNIE…RFEK), 318–338 (KRLS…SFNR), 340–364 (WTQL…VSGL), 365–388 (QNLG…IFSL), 390–410 (SLVV…EFKS), 411–434 (KTLS…LLNQ), 436–458 (SLQF…ICNL), 459–482 (KTLM…VGER), 484–506 (EYLL…TFSI), 507–531 (GNSF…LINC), 532–554 (KYLK…WLGY), 555–579 (LSQL…GSTN), 581–605 (FMRL…ILGN), 649–672 (LDSN…IIGD), 673–696 (LVGL…SFQN), 698–721 (SVLE…LASL), and 723–741 (FLEV…IPKG). N-linked (GlcNAc...) asparagine glycosylation is found at N131, N170, N183, and N191. The N-linked (GlcNAc...) asparagine glycan is linked to N241. N279 and N290 each carry an N-linked (GlcNAc...) asparagine glycan. N-linked (GlcNAc...) asparagine glycosylation is found at N337, N360, N378, and N398. N446 is a glycosylation site (N-linked (GlcNAc...) asparagine). A glycan (N-linked (GlcNAc...) asparagine) is linked at N501. Residue N545 is glycosylated (N-linked (GlcNAc...) asparagine). N656, N680, and N696 each carry an N-linked (GlcNAc...) asparagine glycan. 2 N-linked (GlcNAc...) asparagine glycosylation sites follow: N728 and N749. The interval 742–794 (KQFDSFGNTSYQGNDGLRGFPLSKLCGVDDQVTTPAELDQEEEEEDSPMISWQ) is C-cap/acidic domain. A helical transmembrane segment spans residues 795 to 815 (GVLVGYGCGLVIGLSVIYIMW). Residues 816–845 (STQYPAWFSRMDLKLEHIITTRMKKHKKRY) are Cytoplasmic-facing.

Belongs to the RLP family.

Its subcellular location is the cell membrane. At the opposite of its homolog Cf-9 found in S.pimpinellifolium, was not able to confer resistance to the fungal pathogen C.fulvum. This Solanum lycopersicum (Tomato) protein is Receptor-like protein Cf-9 homolog.